Reading from the N-terminus, the 550-residue chain is Hydroxylamine reductase (550 aa).

[2Fe-2S] cluster-binding residues include Cys-3, Cys-6, Cys-18, and Cys-25. Residues His-249, Glu-273, Cys-317, Cys-405, Cys-433, Cys-458, Glu-492, and Lys-494 each contribute to the hybrid [4Fe-2O-2S] cluster site. Residue Cys-405 is modified to Cysteine persulfide.

The protein belongs to the HCP family. [2Fe-2S] cluster is required as a cofactor. Requires hybrid [4Fe-2O-2S] cluster as cofactor.

It localises to the cytoplasm. The enzyme catalyses A + NH4(+) + H2O = hydroxylamine + AH2 + H(+). Functionally, catalyzes the reduction of hydroxylamine to form NH(3) and H(2)O. The polypeptide is Hydroxylamine reductase (Pectobacterium carotovorum subsp. carotovorum (strain PC1)).